A 195-amino-acid polypeptide reads, in one-letter code: Probable GTP-binding protein EngB (195 aa).

Positions 24–195 (ELPEIALAGR…EAWDAILEKL (172 aa)) constitute an EngB-type G domain. GTP-binding positions include 32 to 39 (GRSNVGKS), 59 to 63 (GKTQL), 77 to 80 (DVPG), 144 to 147 (TKAD), and 176 to 178 (FSS). Ser39 and Thr61 together coordinate Mg(2+).

It belongs to the TRAFAC class TrmE-Era-EngA-EngB-Septin-like GTPase superfamily. EngB GTPase family. Requires Mg(2+) as cofactor.

Its function is as follows. Necessary for normal cell division and for the maintenance of normal septation. The protein is Probable GTP-binding protein EngB of Streptococcus pneumoniae (strain P1031).